The primary structure comprises 466 residues: Muscarinic acetylcholine receptor M2 (466 aa).

The Extracellular segment spans residues 1-25 (MNNSTYINSSSENVIALESPYKTIE). N-linked (GlcNAc...) asparagine glycosylation is found at Asn2, Asn3, and Asn8. A helical membrane pass occupies residues 26 to 48 (VVFIVLVAGSLSLVTIIGNILVM). Residues 49–62 (VSIKVNRHLQTVNN) lie on the Cytoplasmic side of the membrane. Residues 63–83 (YFLFSLACADLIIGIFSMNLY) traverse the membrane as a helical segment. The Extracellular segment spans residues 84–100 (TLYTVIGYWPLGPVVCD). Cys99 and Cys179 are joined by a disulfide. The helical transmembrane segment at 101 to 122 (LWLALDYVVSNASVMNLLIISF) threads the bilayer. Residues 123–125 (DRY) carry the Important for signaling motif. Residues 123–142 (DRYFCVTKPLTYPVKRTTKM) lie on the Cytoplasmic side of the membrane. A helical transmembrane segment spans residues 143-165 (AGMMIAAAWVLSFILWAPAILFW). Residues 166–187 (QFIVGGRTVPDKDCYIQFFSNP) lie on the Extracellular side of the membrane. The chain crosses the membrane as a helical span at residues 188 to 212 (AVTFGTAIAAFYLPVIIMTVLYWQI). The Cytoplasmic segment spans residues 213 to 387 (SRASKSRIKK…PPSREKKVTR (175 aa)). Disordered regions lie at residues 223–265 (GKKE…KVQN) and 279–315 (QGEE…SASQ). 2 stretches are compositionally biased toward polar residues: residues 228 to 238 (AQNQDPVSPSL) and 246 to 256 (PNNNNIPTSSD). Over residues 287–298 (NDSTSVSVVPSN) the composition is skewed to low complexity. Residues 388 to 410 (TILAILLAFIITWTPYNVMVLIN) traverse the membrane as a helical segment. Residues 411–418 (SFCASCIP) lie on the Extracellular side of the membrane. Residues Cys413 and Cys416 are joined by a disulfide bond. A helical membrane pass occupies residues 419 to 442 (GTVWTIGYWLCYINSTINPACYAL). An Important for signaling motif is present at residues 436–440 (NPACY). The Cytoplasmic portion of the chain corresponds to 443-466 (CNATFKKTFKHLLMCHYKNIGATR). Residues Thr446, Thr450, and Thr465 each carry the phosphothreonine modification.

Belongs to the G-protein coupled receptor 1 family. Muscarinic acetylcholine receptor subfamily. CHRM2 sub-subfamily.

Its subcellular location is the cell membrane. It is found in the postsynaptic cell membrane. Functionally, the muscarinic acetylcholine receptor mediates various cellular responses, including inhibition of adenylate cyclase, breakdown of phosphoinositides and modulation of potassium channels through the action of G proteins. Primary transducing effect is adenylate cyclase inhibition. Signaling promotes phospholipase C activity, leading to the release of inositol trisphosphate (IP3); this then triggers calcium ion release into the cytosol. The chain is Muscarinic acetylcholine receptor M2 (CHRM2) from Gallus gallus (Chicken).